A 465-amino-acid polypeptide reads, in one-letter code: UDP-N-acetylmuramoylalanine--D-glutamate ligase (465 aa).

127–133 contributes to the ATP binding site; it reads GSNGKST.

Belongs to the MurCDEF family.

Its subcellular location is the cytoplasm. It catalyses the reaction UDP-N-acetyl-alpha-D-muramoyl-L-alanine + D-glutamate + ATP = UDP-N-acetyl-alpha-D-muramoyl-L-alanyl-D-glutamate + ADP + phosphate + H(+). Its pathway is cell wall biogenesis; peptidoglycan biosynthesis. In terms of biological role, cell wall formation. Catalyzes the addition of glutamate to the nucleotide precursor UDP-N-acetylmuramoyl-L-alanine (UMA). The polypeptide is UDP-N-acetylmuramoylalanine--D-glutamate ligase (Cereibacter sphaeroides (strain ATCC 17023 / DSM 158 / JCM 6121 / CCUG 31486 / LMG 2827 / NBRC 12203 / NCIMB 8253 / ATH 2.4.1.) (Rhodobacter sphaeroides)).